A 120-amino-acid polypeptide reads, in one-letter code: Glycine cleavage system H protein (120 aa).

In terms of domain architecture, Lipoyl-binding spans 17–99 (VATVGITAHA…QGGGWLYRLK (83 aa)). The residue at position 58 (Lys-58) is an N6-lipoyllysine.

It belongs to the GcvH family. The glycine cleavage system is composed of four proteins: P, T, L and H. (R)-lipoate serves as cofactor.

Its function is as follows. The glycine cleavage system catalyzes the degradation of glycine. The H protein shuttles the methylamine group of glycine from the P protein to the T protein. This chain is Glycine cleavage system H protein, found in Methylorubrum extorquens (strain CM4 / NCIMB 13688) (Methylobacterium extorquens).